We begin with the raw amino-acid sequence, 729 residues long: Leucine-rich repeat flightless-interacting protein 2 (729 aa).

Positions 27–69 form a coiled coil; it reads IAREAEARLAAKRAARAEARDIRMRELERQQKELTHRYHDKKW. Disordered stretches follow at residues 80–156, 230–268, and 289–344; these read DHAR…SSSH, SARS…ESAA, and IPDL…CSLD. The segment covering 84–93 has biased composition (basic residues); the sequence is HLQRSSHRHS. Residues 99–110 are compositionally biased toward polar residues; the sequence is VTPNHRSSSVDV. The segment covering 115 to 126 has biased composition (basic and acidic residues); that stretch reads RGRESISRRRDS. Low complexity-rich tracts occupy residues 137 to 147 and 257 to 268; these read RTSNSYSNSYD and SSDFSDQSESAA. The span at 304 to 320 shows a compositional bias: polar residues; that stretch reads TTENYSRPSSRNATSGI. Coiled-coil stretches lie at residues 357-531 and 574-722; these read DLKD…IGEK and LDVR…KANR. The segment at 600–621 is disordered; it reads DDERQKSAKNNSTTTDPTGLEN. Positions 607-616 are enriched in polar residues; that stretch reads AKNNSTTTDP.

This sequence belongs to the LRRFIP family.

Its function is as follows. May function as activator of the canonical Wnt signaling pathway upstream of ctnnb1/beta-catenin. Might be required for dorsal axis formation. The protein is Leucine-rich repeat flightless-interacting protein 2 (lrrfip2) of Xenopus laevis (African clawed frog).